A 281-amino-acid chain; its full sequence is MASRSRRPEHSGPPELFYDQNEARKYVRNSRMIDIQTKMTERALELLCLPEGQPSYLLDIGCGSGLSGDYISEEGHYWVGIDISPAMLDAALDRDTEGDLLLGDMGQGVPFRPGSFDGCISISAVQWLCNANKKSDVPARRLYCFFSSLYSALVRGARAVLQLYPENSEQLELITTQATRAGFTGGVVVDFPNSAKAKKFYLCLFSGPSTSLPKGLTESQDADQASESMFTSERAPHKKARRDLVKKSREWVLEKKERRRRQGKEVRPDTQYTGRKRKPRF.

A compositionally biased stretch (polar residues) spans 212–231 (LPKGLTESQDADQASESMFT). Residues 212–281 (LPKGLTESQD…YTGRKRKPRF (70 aa)) are disordered. Over residues 242–256 (RDLVKKSREWVLEKK) the composition is skewed to basic and acidic residues.

Belongs to the class I-like SAM-binding methyltransferase superfamily. BUD23/WBSCR22 family. As to quaternary structure, heterodimer with TRMT112; this heterodimerization is necessary for the metabolic stability and activity of the catalytic subunit BUD23. Interacts with GRIP1. In terms of processing, may be ubiquitinated and targeted to degradation in response to pro-inflammatory cytokine signaling.

It localises to the nucleus. It is found in the nucleoplasm. The protein resides in the cytoplasm. Its subcellular location is the perinuclear region. It catalyses the reaction a guanosine in 18S rRNA + S-adenosyl-L-methionine = an N(7)-methylguanosine in 18S rRNA + S-adenosyl-L-homocysteine. S-adenosyl-L-methionine-dependent methyltransferase that specifically methylates the N(7) position of a guanine in 18S rRNA. Requires the methyltransferase adapter protein TRM112 for full rRNA methyltransferase activity. Involved in the pre-rRNA processing steps leading to small-subunit rRNA production independently of its RNA-modifying catalytic activity. Important for biogenesis end export of the 40S ribosomal subunit independent on its methyltransferase activity. Locus-specific steroid receptor coactivator. Potentiates transactivation by glucocorticoid (NR3C1), mineralocorticoid (NR3C2), androgen (AR) and progesterone (PGR) receptors. Required for the maintenance of open chromatin at the TSC22D3/GILZ locus to facilitate NR3C1 loading on the response elements. Required for maintenance of dimethylation on histone H3 'Lys-79' (H3K79me2), although direct histone methyltransferase activity is not observed in vitro. This is 18S rRNA (guanine-N(7))-methyltransferase from Mus musculus (Mouse).